The sequence spans 189 residues: 5-hmdU DNA kinase (189 aa).

Belongs to the thymidylate kinase family. 5-hmdU DNA kinase subfamily.

It carries out the reaction 5-hydroxymethyl-dUMP in DNA + ATP = 5-phosphomethyl-dUMP in DNA + ADP + H(+). Phosphorylates 5-hydroxymethyluracil (5hmdU) into 5-phosphomethyl-2'-deoxyuridine (5- PmdU) on DNA as a step in the pathway leading to thymidine hypermodifications in the viral genome. The phosphate is added internally to the DNA polymer. As a final result of the pathway of hypermodification, 5-AcNmdU substitutes for a subset of thymidines in the viral DNA. These modifications probably prevent degradation of viral genome by the host restriction-modification antiviral defense system. In Pseudomonas phage PaMx11, this protein is 5-hmdU DNA kinase.